The primary structure comprises 61 residues: Metallothionein-1C (61 aa).

The beta stretch occupies residues 1 to 29; that stretch reads MDPNCSCSTGGSCSCAGSCTCKACRCTSC. A divalent metal cation is bound by residues C5, C7, C13, C15, C19, C21, C24, C26, C29, C33, C34, C36, C37, C41, C44, C48, C50, C57, C59, and C60. An alpha region spans residues 30 to 61; that stretch reads KKSCCSCCPAGCARCAQGCICKGASDKCSCCA.

This sequence belongs to the metallothionein superfamily. Type 1 family. As to quaternary structure, monomer.

Functionally, metallothioneins have a high content of cysteine residues that bind various heavy metals; these proteins are transcriptionally regulated by both heavy metals and glucocorticoids. The sequence is that of Metallothionein-1C (MT1C) from Sus scrofa (Pig).